The chain runs to 290 residues: MQGILSIQSHVAYGHAGNSSAVFPMQRMGFEVWPIHTVQFSNHTQYQEGWTGRAFSADDISELVRGLNNIGALEKCQAVLTGYQGSAEQCLAVEETVTKVKQANPDALYVCDPVMGAPDKGCIVAPGIAENLLNRLMPMADVIVPNQFELSQFAEMEIHTLDDAIIACQRALAKGPKVVLVKHLYCLSDESFNMLLATQEGTYLAKRPHFEFAKAPVGAGDLISAIFTAGLLKGWTPKQAFQHCHDACYGVLNATYQAGEWELQTIAAQQEFVEPSKHFPLEEVTLKTVE.

Substrate contacts are provided by residues Ser9 and 44–45 (TQ). ATP-binding residues include Asp112, Val144, Glu149, and Lys182. Position 221 (Asp221) interacts with substrate.

Belongs to the pyridoxine kinase family. PdxY subfamily. Homodimer. It depends on Mg(2+) as a cofactor.

It carries out the reaction pyridoxal + ATP = pyridoxal 5'-phosphate + ADP + H(+). It participates in cofactor metabolism; pyridoxal 5'-phosphate salvage; pyridoxal 5'-phosphate from pyridoxal: step 1/1. Pyridoxal kinase involved in the salvage pathway of pyridoxal 5'-phosphate (PLP). Catalyzes the phosphorylation of pyridoxal to PLP. The polypeptide is Pyridoxal kinase PdxY (Vibrio vulnificus (strain CMCP6)).